The sequence spans 203 residues: Pectinesterase inhibitor 12 (203 aa).

The first 26 residues, 1–26, serve as a signal peptide directing secretion; it reads MRMSKALAAVVAISVSLSAAAMGVDA. 2 disulfides stabilise this stretch: C32–C47 and C100–C140.

This sequence belongs to the PMEI family.

It localises to the secreted. The protein localises to the extracellular space. Its subcellular location is the apoplast. Its function is as follows. Pectin methylesterase (PME) inhibitor that inhibits PME in vitro. The protein is Pectinesterase inhibitor 12 of Oryza sativa subsp. japonica (Rice).